Consider the following 261-residue polypeptide: Claudin-18 (261 aa).

Residues 1–6 (MSTTTC) lie on the Cytoplasmic side of the membrane. The chain crosses the membrane as a helical span at residues 7 to 27 (QVVAFLLSILGLAGCIAATGM). Residues 28–80 (DMWSTQDLYDNPVTSVFQYEGLWRSCVRQSSGFTECRPYFTILGLPAMLQAVR) are Extracellular-facing. The helical transmembrane segment at 81 to 101 (ALMIVGIVLGAIGLLVSIFAL) threads the bilayer. Residues 102–122 (KCIRIGSMEDSAKANMTLTSG) are Cytoplasmic-facing. The helical transmembrane segment at 123-143 (IMFIVSGLCAIAGVSVFANML) threads the bilayer. Residues 144-174 (VTNFWMSTANMYTGMGGMVQTVQTRYTFGAA) lie on the Extracellular side of the membrane. A helical transmembrane segment spans residues 175–195 (LFVGWVAGGLTLIGGVMMCIA). The segment at 195 to 261 (ACRGLAPEET…QSYPSKHDYV (67 aa)) is required for role in regulation of RANKL-induced osteoclast differentiation. Over 196–261 (CRGLAPEETN…QSYPSKHDYV (66 aa)) the chain is Cytoplasmic. The residue at position 214 (serine 214) is a Phosphoserine. Residues 242–261 (DGGARTEDEVQSYPSKHDYV) are disordered.

This sequence belongs to the claudin family. In terms of assembly, interacts with TJP2/ZO-2. Interacts with TJP1/ZO-1. Interacts with YAP1 (phosphorylated); the interaction sequesters YAP1 away from the nucleus and thereby restricts transcription of YAP1 target genes. As to quaternary structure, interacts with CLDN19. Expression is restricted to the lung. As to expression, expression is restricted to the stomach mucosa where it is predominantly observed in the epithelial cells of the pit region and the base of the gastric glands including exocrine and endocrine cells (at protein level).

Its subcellular location is the cell junction. The protein localises to the tight junction. The protein resides in the cell membrane. It is found in the lateral cell membrane. Functionally, involved in alveolar fluid homeostasis via regulation of alveolar epithelial tight junction composition and therefore ion transport and solute permeability, potentially via downstream regulation of the actin cytoskeleton organization and beta-2-adrenergic signaling. Required for lung alveolarization and maintenance of the paracellular alveolar epithelial barrier. Acts to maintain epithelial progenitor cell proliferation and organ size, via regulation of YAP1 localization away from the nucleus and thereby restriction of YAP1 target gene transcription. Acts as a negative regulator of RANKL-induced osteoclast differentiation, potentially via relocation of TJP2/ZO-2 away from the nucleus, subsequently involved in bone resorption in response to calcium deficiency. Mediates the osteoprotective effects of estrogen, potentially via acting downstream of estrogen signaling independently of RANKL signaling pathways. Its function is as follows. Involved in the maintenance of homeostasis of the alveolar microenvironment via regulation of pH and subsequent T-cell activation in the alveolar space, is therefore indirectly involved in limiting C.neoformans infection. Required for the formation of the gastric paracellular barrier via its role in tight junction formation, thereby involved in the response to gastric acidification. This chain is Claudin-18 (CLDN18), found in Homo sapiens (Human).